Consider the following 383-residue polypeptide: Paralemmin-1 (383 aa).

M1 is modified (N-acetylmethionine). Positions 7 to 101 form a coiled coil; sequence DTVSQQERLQ…EKEIDVLEFG (95 aa). 3 disordered regions span residues 51-164, 242-293, and 333-374; these read RERW…STMM, TLSE…QPGQ, and SVTP…DMKK. Residues 69–96 show a composition bias toward basic and acidic residues; that stretch reads DMRKQMQEDEQKARSLEESITRLEKEID. Residues S116, S122, and S124 each carry the phosphoserine modification. Residues 133 to 143 are compositionally biased toward polar residues; it reads ETMVNAQQTPL. 3 positions are modified to phosphothreonine: T141, T145, and T153. 2 positions are modified to phosphoserine: S157 and S161. T242 carries the phosphothreonine modification. Residue S244 is modified to Phosphoserine. Residues 257–273 show a composition bias toward basic and acidic residues; it reads GLAEDVTRTTPSRREIT. The residue at position 345 (S345) is a Phosphoserine. Residues 357–367 show a composition bias toward polar residues; the sequence is QTGPTTTPSDT. Residues T361, T362, and T363 each carry the phosphothreonine modification. S365 carries the post-translational modification Phosphoserine. T367 carries the post-translational modification Phosphothreonine. Residues C377 and C379 are each lipidated (S-palmitoyl cysteine). A Cysteine methyl ester modification is found at C380. C380 is lipidated: S-farnesyl cysteine. A propeptide spans 381–383 (removed in mature form); that stretch reads SVM.

The protein belongs to the paralemmin family. In terms of assembly, interacts with dopamine receptor DRD3. Expressed in neurons cells of neuropil-rich areas of the brain, in the Purkinje cells of the cerebellum, in cells of the cerebral cortex, hippocampus, brainstem nuclei and glial processes and sheaths. Expressed in the medulla of the adrenal chromaffin cells and renal duct cells (at protein level).

The protein localises to the cell membrane. Its subcellular location is the cell projection. The protein resides in the filopodium membrane. It localises to the axon. It is found in the dendrite. The protein localises to the dendritic spine. Its subcellular location is the basolateral cell membrane. The protein resides in the apicolateral cell membrane. In terms of biological role, involved in plasma membrane dynamics and cell process formation. Necessary for axonal and dendritic filopodia induction, for dendritic spine maturation and synapse formation in a palmitoylation-dependent manner. This chain is Paralemmin-1 (Palm), found in Rattus norvegicus (Rat).